The sequence spans 153 residues: MSHPLPPNIQEILQLLPHRYPFLLVDRVIEFNAGKYIKAYKNVSINEPFFQGHFPGFPVMPGVLILEAMAQSGGITVLQSFPINELQGKVFLFAGIENVKFRQQVIPGDQLILECEIIRHKLQLWKMSCQAFVNNKLVAEAILTAAMTNKENF.

H53 is a catalytic residue.

This sequence belongs to the thioester dehydratase family. FabZ subfamily.

The protein resides in the cytoplasm. The enzyme catalyses a (3R)-hydroxyacyl-[ACP] = a (2E)-enoyl-[ACP] + H2O. Functionally, involved in unsaturated fatty acids biosynthesis. Catalyzes the dehydration of short chain beta-hydroxyacyl-ACPs and long chain saturated and unsaturated beta-hydroxyacyl-ACPs. This Lawsonia intracellularis (strain PHE/MN1-00) protein is 3-hydroxyacyl-[acyl-carrier-protein] dehydratase FabZ.